The primary structure comprises 144 residues: Putative pre-16S rRNA nuclease (144 aa).

This sequence belongs to the YqgF nuclease family.

It localises to the cytoplasm. In terms of biological role, could be a nuclease involved in processing of the 5'-end of pre-16S rRNA. This Symbiobacterium thermophilum (strain DSM 24528 / JCM 14929 / IAM 14863 / T) protein is Putative pre-16S rRNA nuclease.